The chain runs to 300 residues: Junctional adhesion molecule A (300 aa).

Residues 1-26 (MGTEGKAGSKLLFLFTSMILGSLVQG) form the signal peptide. Over 27-238 (KGSVYSPQTA…MEAVELNVGG (212 aa)) the chain is Extracellular. 2 consecutive Ig-like V-type domains span residues 28-122 (GSVY…GEVS) and 134-228 (PTVS…EAVR). 2 disulfides stabilise this stretch: C49-C108 and C152-C212. N-linked (GlcNAc...) asparagine glycosylation occurs at N185. A helical membrane pass occupies residues 239-259 (IVAAVLVTLILLGLLIFGIWF). The Cytoplasmic portion of the chain corresponds to 260-300 (AYSRGYFERTKKGTAPGKKVIYSQPSARSEGEFKQTSSFLV). Phosphoserine is present on residues S282, S285, and S288.

Belongs to the immunoglobulin superfamily. In terms of assembly, interacts with the ninth PDZ domain of MPDZ. Interacts with the first PDZ domain of PARD3. The association between PARD3 and PARD6B probably disrupts this interaction. Interacts with ITGAL (via I-domain). Interacts with CD151. In terms of processing, N-glycosylated.

The protein localises to the cell junction. The protein resides in the tight junction. It localises to the cell membrane. Seems to play a role in epithelial tight junction formation. Appears early in primordial forms of cell junctions and recruits PARD3. The association of the PARD6-PARD3 complex may prevent the interaction of PARD3 with JAM1, thereby preventing tight junction assembly. Plays a role in regulating monocyte transmigration involved in integrity of epithelial barrier. Ligand for integrin alpha-L/beta-2 involved in memory T-cell and neutrophil transmigration. This chain is Junctional adhesion molecule A (F11r), found in Rattus norvegicus (Rat).